Here is a 358-residue protein sequence, read N- to C-terminus: S-adenosylmethionine:tRNA ribosyltransferase-isomerase (358 aa).

It belongs to the QueA family. Monomer.

The protein localises to the cytoplasm. The enzyme catalyses 7-aminomethyl-7-carbaguanosine(34) in tRNA + S-adenosyl-L-methionine = epoxyqueuosine(34) in tRNA + adenine + L-methionine + 2 H(+). It participates in tRNA modification; tRNA-queuosine biosynthesis. Transfers and isomerizes the ribose moiety from AdoMet to the 7-aminomethyl group of 7-deazaguanine (preQ1-tRNA) to give epoxyqueuosine (oQ-tRNA). This Chelativorans sp. (strain BNC1) protein is S-adenosylmethionine:tRNA ribosyltransferase-isomerase.